The following is a 441-amino-acid chain: Nucleoprotein (441 aa).

Phosphoserine; by host is present on Ser-5. A CoV N NTD domain is found at 14 to 136 (VPLSLYAPLR…QLPSVVEIVE (123 aa)). An RNA-binding region spans residues 16 to 146 (LSLYAPLRVT…PNTPPASRAN (131 aa)). 2 disordered regions span residues 131–219 (VVEI…VTSR) and 231–278 (KSLG…LKDI). Position 143 is a phosphoserine; by host (Ser-143). The segment covering 143–215 (SRANSRSRSR…NRNQSNDRGG (73 aa)) has biased composition (low complexity). 2 stretches are compositionally biased toward basic and acidic residues: residues 238 to 255 (NPDR…KSDN) and 269 to 278 (TSKERDLKDI). Positions 266–382 (SRATSKERDL…AFKTGNAKLQ (117 aa)) constitute a CoV N CTD domain. The interval 277-379 (DIPEWRRIPK…QVDAFKTGNA (103 aa)) is dimerization.

It belongs to the alphacoronavirus nucleocapsid protein family. Homooligomer. Both monomeric and oligomeric forms interact with RNA. Interacts with protein M. Interacts with NSP3; this interaction serves to tether the genome to the newly translated replicase-transcriptase complex at a very early stage of infection. Interacts with host RSAD2; this interaction inhibits viral replication. Post-translationally, ADP-ribosylated. The ADP-ribosylation is retained in the virion during infection. In terms of processing, phosphorylated on serine and threonine residues.

Its subcellular location is the virion. The protein resides in the host endoplasmic reticulum-Golgi intermediate compartment. It is found in the host Golgi apparatus. Functionally, packages the positive strand viral genome RNA into a helical ribonucleocapsid (RNP) and plays a fundamental role during virion assembly through its interactions with the viral genome and membrane protein M. Plays an important role in enhancing the efficiency of subgenomic viral RNA transcription as well as viral replication. The protein is Nucleoprotein of Porcine epidemic diarrhea virus (strain CV777) (PEDV).